Consider the following 286-residue polypeptide: Nucleotide-binding protein PSPA7_5038 (286 aa).

8–15 (GRSGSGKS) is an ATP binding site. 60–63 (DARN) contributes to the GTP binding site.

This sequence belongs to the RapZ-like family.

Displays ATPase and GTPase activities. In Pseudomonas paraeruginosa (strain DSM 24068 / PA7) (Pseudomonas aeruginosa (strain PA7)), this protein is Nucleotide-binding protein PSPA7_5038.